The chain runs to 179 residues: MGITAGKSMLALLAFLAFASCCYAAYRPSETLCGGELVDTLQFVCGDRGFYFSRPSSRINRRSRGIVEECCFRSCDLALLETYCAAPAKSERDVSASTTVLPDDFTAYPVGKFFQSDTWKQSTQRLRRGLPAFLRARRGRTLAKELEALREAKSHRPLIALPTQDPATHGGASSEASSD.

Residues 1–24 form the signal peptide; the sequence is MGITAGKSMLALLAFLAFASCCYA. Residues 25 to 52 form a b region; that stretch reads AYRPSETLCGGELVDTLQFVCGDRGFYF. 3 disulfides stabilise this stretch: C33–C71, C45–C84, and C70–C75. A c region spans residues 53-64; sequence SRPSSRINRRSR. The segment at 65 to 85 is a; the sequence is GIVEECCFRSCDLALLETYCA. The interval 86–91 is d; sequence APAKSE. Residues 92 to 179 constitute a propeptide, e peptide; that stretch reads RDVSASTTVL…GGASSEASSD (88 aa). T106 is a glycosylation site (O-linked (GalNAc...) threonine). O-linked (GalNAc...) serine glycosylation occurs at S154. A disordered region spans residues 160–179; that stretch reads ALPTQDPATHGGASSEASSD. T163 carries O-linked (GalNAc...) threonine glycosylation.

This sequence belongs to the insulin family. As to quaternary structure, interacts with MYORG; this interaction is required for IGF2 secretion. Interacts with integrins ITGAV:ITGB3 and ITGA6:ITGB4; integrin-binding is required for IGF2 signaling. Interacts with IGFBP2. Post-translationally, proteolytically processed by PCSK4, proIGF2 is cleaved at Arg-128 and Arg-92 to generate big-IGF2 and mature IGF2.

Its subcellular location is the secreted. The insulin-like growth factors possess growth-promoting activity. Major fetal growth hormone in mammals. Plays a key role in regulating fetoplacental development. IGF2 is influenced by placental lactogen. Also involved in tissue differentiation. In adults, involved in glucose metabolism in adipose tissue, skeletal muscle and liver. Acts as a ligand for integrin which is required for IGF2 signaling. Positively regulates myogenic transcription factor MYOD1 function by facilitating the recruitment of transcriptional coactivators, thereby controlling muscle terminal differentiation. Inhibits myoblast differentiation and modulates metabolism via increasing the mitochondrial respiration rate. Functionally, preptin undergoes glucose-mediated co-secretion with insulin, and acts as a physiological amplifier of glucose-mediated insulin secretion. Exhibits osteogenic properties by increasing osteoblast mitogenic activity through phosphoactivation of MAPK1 and MAPK3. In Ovis aries (Sheep), this protein is Insulin-like growth factor 2.